The following is a 146-amino-acid chain: Leptin (146 aa).

Residues Cys96 and Cys146 are joined by a disulfide bond.

The protein belongs to the leptin family.

It localises to the secreted. Key player in the regulation of energy balance and body weight control. Once released into the circulation, has central and peripheral effects by binding LEPR, found in many tissues, which results in the activation of several major signaling pathways. In the hypothalamus, acts as an appetite-regulating factor that induces a decrease in food intake and an increase in energy consumption by inducing anorexinogenic factors and suppressing orexigenic neuropeptides, also regulates bone mass and secretion of hypothalamo-pituitary-adrenal hormones. In the periphery, increases basal metabolism, influences reproductive function, regulates pancreatic beta-cell function and insulin secretion, is pro-angiogenic for endothelial cell and affects innate and adaptive immunity. In the arcuate nucleus of the hypothalamus, activates by depolarization POMC neurons inducing FOS and SOCS3 expression to release anorexigenic peptides and inhibits by hyperpolarization NPY neurons inducing SOCS3 with a consequent reduction on release of orexigenic peptides. In addition to its known satiety inducing effect, has a modulatory role in nutrient absorption. In the intestine, reduces glucose absorption by enterocytes by activating PKC and leading to a sequential activation of p38, PI3K and ERK signaling pathways which exerts an inhibitory effect on glucose absorption. Acts as a growth factor on certain tissues, through the activation of different signaling pathways increases expression of genes involved in cell cycle regulation such as CCND1, via JAK2-STAT3 pathway, or VEGFA, via MAPK1/3 and PI3K-AKT1 pathways. May also play an apoptotic role via JAK2-STAT3 pathway and up-regulation of BIRC5 expression. Pro-angiogenic, has mitogenic activity on vascular endothelial cells and plays a role in matrix remodeling by regulating the expression of matrix metalloproteinases (MMPs) and tissue inhibitors of metalloproteinases (TIMPs). In innate immunity, modulates the activity and function of neutrophils by increasing chemotaxis and the secretion of oxygen radicals. Increases phagocytosis by macrophages and enhances secretion of pro-inflammatory mediators. Increases cytotoxic ability of NK cells. Plays a pro-inflammatory role, in synergy with IL1B, by inducing NOS2 which promotes the production of IL6, IL8 and Prostaglandin E2, through a signaling pathway that involves JAK2, PI3K, MAP2K1/MEK1 and MAPK14/p38. In adaptive immunity, promotes the switch of memory T-cells towards T helper-1 cell immune responses. Increases CD4(+)CD25(-) T-cell proliferation and reduces autophagy during TCR (T-cell receptor) stimulation, through MTOR signaling pathway activation and BCL2 up-regulation. In Ovis aries (Sheep), this protein is Leptin (LEP).